The chain runs to 694 residues: Elongation factor G 1 (694 aa).

A tr-type G domain is found at 5-280; it reads SRYRNIGIFA…AVVDYLPDPT (276 aa). Residues 14–21, 78–82, and 132–135 each bind GTP; these read AHVDAGKT, DTPGH, and NKLD.

Belongs to the TRAFAC class translation factor GTPase superfamily. Classic translation factor GTPase family. EF-G/EF-2 subfamily.

The protein resides in the cytoplasm. Its function is as follows. Catalyzes the GTP-dependent ribosomal translocation step during translation elongation. During this step, the ribosome changes from the pre-translocational (PRE) to the post-translocational (POST) state as the newly formed A-site-bound peptidyl-tRNA and P-site-bound deacylated tRNA move to the P and E sites, respectively. Catalyzes the coordinated movement of the two tRNA molecules, the mRNA and conformational changes in the ribosome. This is Elongation factor G 1 from Methylococcus capsulatus (strain ATCC 33009 / NCIMB 11132 / Bath).